A 153-amino-acid chain; its full sequence is Aspartate carbamoyltransferase regulatory chain (153 aa).

Positions 109, 114, 138, and 141 each coordinate Zn(2+).

It belongs to the PyrI family. In terms of assembly, contains catalytic and regulatory chains. It depends on Zn(2+) as a cofactor.

Its function is as follows. Involved in allosteric regulation of aspartate carbamoyltransferase. This is Aspartate carbamoyltransferase regulatory chain from Klebsiella pneumoniae subsp. pneumoniae (strain ATCC 700721 / MGH 78578).